We begin with the raw amino-acid sequence, 343 residues long: D-alanine--D-alanine ligase (343 aa).

Positions K129–E335 constitute an ATP-grasp domain. E162–E217 is an ATP binding site. Mg(2+) is bound by residues D288, E302, and N304.

It belongs to the D-alanine--D-alanine ligase family. The cofactor is Mg(2+). It depends on Mn(2+) as a cofactor.

The protein localises to the cytoplasm. The catalysed reaction is 2 D-alanine + ATP = D-alanyl-D-alanine + ADP + phosphate + H(+). Its pathway is cell wall biogenesis; peptidoglycan biosynthesis. Its function is as follows. Cell wall formation. This is D-alanine--D-alanine ligase from Clostridium novyi (strain NT).